Reading from the N-terminus, the 249-residue chain is Probable transcriptional regulatory protein Rru_A1086 (249 aa).

The protein belongs to the TACO1 family.

It is found in the cytoplasm. The sequence is that of Probable transcriptional regulatory protein Rru_A1086 from Rhodospirillum rubrum (strain ATCC 11170 / ATH 1.1.1 / DSM 467 / LMG 4362 / NCIMB 8255 / S1).